Reading from the N-terminus, the 148-residue chain is Transcriptional regulator MraZ (148 aa).

SpoVT-AbrB domains follow at residues 5–51 (AAAL…PSPA) and 80–123 (ARTE…SEAG).

The protein belongs to the MraZ family. Forms oligomers.

It localises to the cytoplasm. The protein resides in the nucleoid. This chain is Transcriptional regulator MraZ, found in Dechloromonas aromatica (strain RCB).